The following is a 173-amino-acid chain: Crossover junction endodeoxyribonuclease RuvC (173 aa).

Catalysis depends on residues Asp-8, Glu-67, and Asp-139. Residues Asp-8, Glu-67, and Asp-139 each contribute to the Mg(2+) site.

This sequence belongs to the RuvC family. Homodimer which binds Holliday junction (HJ) DNA. The HJ becomes 2-fold symmetrical on binding to RuvC with unstacked arms; it has a different conformation from HJ DNA in complex with RuvA. In the full resolvosome a probable DNA-RuvA(4)-RuvB(12)-RuvC(2) complex forms which resolves the HJ. Mg(2+) serves as cofactor.

It localises to the cytoplasm. It carries out the reaction Endonucleolytic cleavage at a junction such as a reciprocal single-stranded crossover between two homologous DNA duplexes (Holliday junction).. In terms of biological role, the RuvA-RuvB-RuvC complex processes Holliday junction (HJ) DNA during genetic recombination and DNA repair. Endonuclease that resolves HJ intermediates. Cleaves cruciform DNA by making single-stranded nicks across the HJ at symmetrical positions within the homologous arms, yielding a 5'-phosphate and a 3'-hydroxyl group; requires a central core of homology in the junction. The consensus cleavage sequence is 5'-(A/T)TT(C/G)-3'. Cleavage occurs on the 3'-side of the TT dinucleotide at the point of strand exchange. HJ branch migration catalyzed by RuvA-RuvB allows RuvC to scan DNA until it finds its consensus sequence, where it cleaves and resolves the cruciform DNA. The polypeptide is Crossover junction endodeoxyribonuclease RuvC (Shewanella amazonensis (strain ATCC BAA-1098 / SB2B)).